The chain runs to 325 residues: MANLRELRSRIKSVNSTKKITKAQELIATSRITKAQARVDASQPYAHEITKVIERLASASSLDHKMIREPKDPKRAAILVVSSDRGMCGGYNNNVFKTTAELRKLLEDEGKEVVLYVLGSKGVTYYNFRNENISGSWTGHSQDPVYAETLNLRNHLIGGFLAGSEGTVDVVDGVNAEGDQVPGFDEVHMVYTEFHSMLSQVPKAHRLLPIKTVVEEEKMELGSDMVSDSADQVSAEVDFEPDADTLLANLLPQYVSRGIFAALLEAAASESAARRTAMSAATDNASELVENLSRIANQARQAQITQEITEIVGGASALGDSGESD.

The protein belongs to the ATPase gamma chain family. As to quaternary structure, F-type ATPases have 2 components, CF(1) - the catalytic core - and CF(0) - the membrane proton channel. CF(1) has five subunits: alpha(3), beta(3), gamma(1), delta(1), epsilon(1). CF(0) has three main subunits: a, b and c.

Its subcellular location is the cell membrane. Functionally, produces ATP from ADP in the presence of a proton gradient across the membrane. The gamma chain is believed to be important in regulating ATPase activity and the flow of protons through the CF(0) complex. The polypeptide is ATP synthase gamma chain (Corynebacterium urealyticum (strain ATCC 43042 / DSM 7109)).